Consider the following 307-residue polypeptide: Homoserine kinase (307 aa).

86–96 (PIARGLGSSAA) is an ATP binding site.

This sequence belongs to the GHMP kinase family. Homoserine kinase subfamily.

It localises to the cytoplasm. The enzyme catalyses L-homoserine + ATP = O-phospho-L-homoserine + ADP + H(+). The protein operates within amino-acid biosynthesis; L-threonine biosynthesis; L-threonine from L-aspartate: step 4/5. Catalyzes the ATP-dependent phosphorylation of L-homoserine to L-homoserine phosphate. This Petrotoga mobilis (strain DSM 10674 / SJ95) protein is Homoserine kinase.